We begin with the raw amino-acid sequence, 283 residues long: Phosphatidylglycerol--prolipoprotein diacylglyceryl transferase (283 aa).

3 consecutive transmembrane segments (helical) span residues 17 to 37, 56 to 76, and 88 to 108; these read LAVR…TFLG, FLTW…VLFY, and IFKV…VVIA. Arg-139 lines the a 1,2-diacyl-sn-glycero-3-phospho-(1'-sn-glycerol) pocket. 2 consecutive transmembrane segments (helical) span residues 222 to 242 and 255 to 275; these read GQVA…AEFA and GLSM…VGFV.

Belongs to the Lgt family.

The protein localises to the cell inner membrane. It catalyses the reaction L-cysteinyl-[prolipoprotein] + a 1,2-diacyl-sn-glycero-3-phospho-(1'-sn-glycerol) = an S-1,2-diacyl-sn-glyceryl-L-cysteinyl-[prolipoprotein] + sn-glycerol 1-phosphate + H(+). It functions in the pathway protein modification; lipoprotein biosynthesis (diacylglyceryl transfer). In terms of biological role, catalyzes the transfer of the diacylglyceryl group from phosphatidylglycerol to the sulfhydryl group of the N-terminal cysteine of a prolipoprotein, the first step in the formation of mature lipoproteins. This is Phosphatidylglycerol--prolipoprotein diacylglyceryl transferase from Neisseria meningitidis serogroup B (strain ATCC BAA-335 / MC58).